The primary structure comprises 90 residues: Antitoxin epsilon (90 aa).

It belongs to the epsilon antitoxin family. In terms of assembly, in the presence of the zeta toxin, forms an inactive PezA(2)PezT(2) heterotetramer. The heterotetramer is still able to bind the zeta toxin substrate UNAG.

Its function is as follows. Antitoxin component of a type II toxin-antitoxin (TA) system. Neutralizes the toxic effect of cognate zeta toxin. Part of a postsegregational killing (PSK) system involved in the killing of plasmid-free cells. Continuous synthesis of the epsilon antitoxin is required to counteract the zeta toxin. The protein is Antitoxin epsilon of Streptococcus pyogenes.